An 85-amino-acid polypeptide reads, in one-letter code: Coiled-coil-helix-coiled-coil-helix domain-containing protein 7 (85 aa).

A CHCH domain is found at 13–55 (INPCLSESDASTRCLDENNYDKERCSTYFLKYKNCRKFWHSIM). 2 consecutive short sequence motifs (cx9C motif) follow at residues 16–26 (CLSESDASTRC) and 37–47 (CSTYFLKYKNC). 2 disulfides stabilise this stretch: Cys-16-Cys-47 and Cys-26-Cys-37.

Belongs to the CHCHD7 family. Monomer.

The protein localises to the mitochondrion intermembrane space. The protein is Coiled-coil-helix-coiled-coil-helix domain-containing protein 7 (CHCHD7) of Macaca fascicularis (Crab-eating macaque).